The following is a 72-amino-acid chain: Translational regulator CsrA (72 aa).

This sequence belongs to the CsrA/RsmA family. As to quaternary structure, homodimer; the beta-strands of each monomer intercalate to form a hydrophobic core, while the alpha-helices form wings that extend away from the core.

It is found in the cytoplasm. In terms of biological role, a translational regulator that binds mRNA to regulate translation initiation and/or mRNA stability. Usually binds in the 5'-UTR at or near the Shine-Dalgarno sequence preventing ribosome-binding, thus repressing translation. Its main target seems to be the major flagellin gene, while its function is anatagonized by FliW. In Clostridium botulinum (strain 657 / Type Ba4), this protein is Translational regulator CsrA.